The primary structure comprises 398 residues: Gastric triacylglycerol lipase (398 aa).

Positions 1 to 19 (MWLLLTMASLISVLGTTHG) are cleaved as a signal peptide. 2 N-linked (GlcNAc...) asparagine glycosylation sites follow: Asn-34 and Asn-99. One can recognise an AB hydrolase-1 domain in the interval 78–377 (PVVFLQHGLL…PFYNHLDFIW (300 aa)). Ser-172 (nucleophile) is an active-site residue. Residues Cys-246 and Cys-255 are joined by a disulfide bond. Residues Asn-271 and Asn-327 are each glycosylated (N-linked (GlcNAc...) asparagine). Residues Asp-343 and His-372 each act as charge relay system in the active site.

It belongs to the AB hydrolase superfamily. Lipase family.

The protein localises to the secreted. The enzyme catalyses a triacylglycerol + H2O = a diacylglycerol + a fatty acid + H(+). It carries out the reaction 1,2,3-tri-(9Z-octadecenoyl)-glycerol + H2O = 1,2-di-(9Z-octadecenoyl)-sn-glycerol + (9Z)-octadecenoate + H(+). The catalysed reaction is 1,2,3-trioctanoylglycerol + H2O = 1,2-dioctanoyl-sn-glycerol + octanoate + H(+). Functionally, catalyzes the hydrolysis of triacylglycerols to yield free fatty acids, diacylglycerol, monoacylglycerol, and glycerol. Shows a preferential hydrolysis at the sn-3 position of triacylglycerol. This chain is Gastric triacylglycerol lipase (LIPF), found in Homo sapiens (Human).